We begin with the raw amino-acid sequence, 114 residues long: Ribosome-binding factor A (114 aa).

It belongs to the RbfA family. As to quaternary structure, monomer. Binds 30S ribosomal subunits, but not 50S ribosomal subunits or 70S ribosomes.

The protein localises to the cytoplasm. One of several proteins that assist in the late maturation steps of the functional core of the 30S ribosomal subunit. Associates with free 30S ribosomal subunits (but not with 30S subunits that are part of 70S ribosomes or polysomes). Required for efficient processing of 16S rRNA. May interact with the 5'-terminal helix region of 16S rRNA. The protein is Ribosome-binding factor A of Vesicomyosocius okutanii subsp. Calyptogena okutanii (strain HA).